Reading from the N-terminus, the 1067-residue chain is Lon protease homolog, mitochondrial (1067 aa).

The transit peptide at 1–36 (MITRLSGACLRRSGAKRNWPREHLVHRSLLASFSTT) directs the protein to the mitochondrion. Positions 55 to 82 (KSKEPKDNKPLDNKNDPKKTHNEDESHT) are enriched in basic and acidic residues. Disordered stretches follow at residues 55-142 (KSKE…MPLN) and 262-314 (IPPK…ESTP). Positions 128–139 (FELGGEENEDEM) are enriched in acidic residues. The 264-residue stretch at 162 to 425 (LLALPIARRP…KALYVLKKEL (264 aa)) folds into the Lon N-terminal domain. A compositionally biased stretch (basic and acidic residues) spans 293–311 (VKSDLKQDNGKEEPEKEVE). Residue 578 to 585 (GPPGVGKT) coordinates ATP. A disordered region spans residues 791-820 (NSKEKSTGKSGKKTSPQSSEDAANKEASSV). One can recognise a Lon proteolytic domain in the interval 854 to 1040 (TTPPGVVMGL…DDVFKRVFSN (187 aa)). Residues Ser946 and Lys989 contribute to the active site.

It belongs to the peptidase S16 family. In terms of assembly, homohexamer or homoheptamer. Organized in a ring with a central cavity.

The protein localises to the mitochondrion matrix. The catalysed reaction is Hydrolysis of proteins in presence of ATP.. Its function is as follows. ATP-dependent serine protease that mediates the selective degradation of misfolded, unassembled or oxidatively damaged polypeptides as well as certain short-lived regulatory proteins in the mitochondrial matrix. May also have a chaperone function in the assembly of inner membrane protein complexes. Participates in the regulation of mitochondrial gene expression and in the maintenance of the integrity of the mitochondrial genome. Binds to mitochondrial DNA in a site-specific manner. In Schizosaccharomyces pombe (strain 972 / ATCC 24843) (Fission yeast), this protein is Lon protease homolog, mitochondrial (pim1).